We begin with the raw amino-acid sequence, 434 residues long: Serine--tRNA ligase (434 aa).

239–241 provides a ligand contact to L-serine; that stretch reads TAE. 270–272 lines the ATP pocket; that stretch reads RSE. L-serine is bound at residue E293. 357-360 serves as a coordination point for ATP; the sequence is EISS. S392 contributes to the L-serine binding site.

Belongs to the class-II aminoacyl-tRNA synthetase family. Type-1 seryl-tRNA synthetase subfamily. Homodimer. The tRNA molecule binds across the dimer.

The protein resides in the cytoplasm. The enzyme catalyses tRNA(Ser) + L-serine + ATP = L-seryl-tRNA(Ser) + AMP + diphosphate + H(+). It catalyses the reaction tRNA(Sec) + L-serine + ATP = L-seryl-tRNA(Sec) + AMP + diphosphate + H(+). It functions in the pathway aminoacyl-tRNA biosynthesis; selenocysteinyl-tRNA(Sec) biosynthesis; L-seryl-tRNA(Sec) from L-serine and tRNA(Sec): step 1/1. In terms of biological role, catalyzes the attachment of serine to tRNA(Ser). Is also able to aminoacylate tRNA(Sec) with serine, to form the misacylated tRNA L-seryl-tRNA(Sec), which will be further converted into selenocysteinyl-tRNA(Sec). This Cupriavidus taiwanensis (strain DSM 17343 / BCRC 17206 / CCUG 44338 / CIP 107171 / LMG 19424 / R1) (Ralstonia taiwanensis (strain LMG 19424)) protein is Serine--tRNA ligase.